We begin with the raw amino-acid sequence, 208 residues long: ATP-dependent Clp protease proteolytic subunit (208 aa).

The active-site Nucleophile is the Ser105. Residue His130 is part of the active site.

It belongs to the peptidase S14 family. As to quaternary structure, fourteen ClpP subunits assemble into 2 heptameric rings which stack back to back to give a disk-like structure with a central cavity, resembling the structure of eukaryotic proteasomes.

It localises to the cytoplasm. It catalyses the reaction Hydrolysis of proteins to small peptides in the presence of ATP and magnesium. alpha-casein is the usual test substrate. In the absence of ATP, only oligopeptides shorter than five residues are hydrolyzed (such as succinyl-Leu-Tyr-|-NHMec, and Leu-Tyr-Leu-|-Tyr-Trp, in which cleavage of the -Tyr-|-Leu- and -Tyr-|-Trp bonds also occurs).. Cleaves peptides in various proteins in a process that requires ATP hydrolysis. Has a chymotrypsin-like activity. Plays a major role in the degradation of misfolded proteins. The polypeptide is ATP-dependent Clp protease proteolytic subunit (Xanthomonas axonopodis pv. citri (strain 306)).